The sequence spans 276 residues: Integrin-binding sialoprotein (276 aa).

The N-terminal stretch at 1 to 16 (MRSALLLACLLATASA) is a signal peptide. The segment at 54-251 (HRYKGSDSSE…EEPARGDSYR (198 aa)) is disordered. The span at 61 to 75 (SSEEEGDGSEEEEEG) shows a compositional bias: acidic residues. Positions 106 to 119 (QDCKGGQKGTRGDS) are enriched in basic and acidic residues. The short motif at 116-118 (RGD) is the Cell attachment site element. Acidic residues predominate over residues 120 to 144 (GDEDSDEEEEEEEEEEEEEEVEEQD). Residues 145-165 (VSVNGTSTNTTAETPHGNNTV) are compositionally biased toward polar residues. N-linked (GlcNAc...) asparagine glycans are attached at residues asparagine 148, asparagine 153, and asparagine 162. Positions 167–188 (AEEEEDDDEEEEEEEEEEEEAE) are enriched in acidic residues. Over residues 189–200 (ATTAAATTAQDE) the composition is skewed to low complexity. Residues 228–230 (RGD) carry the Cell attachment site motif. Residues 246 to 248 (RGD) carry the Integrin-binding motif motif. Sulfotyrosine is present on residues tyrosine 272 and tyrosine 273.

As to quaternary structure, monomer. Interacts with integrins; the interaction promotes cell adhesion. Phosphorylated on serine and threonine residues.

It is found in the secreted. In terms of biological role, binds tightly to hydroxyapatite. Appears to form an integral part of the mineralized matrix. Probably important to cell-matrix interaction. Promotes adhesion and migration of various cells via the alpha-V/beta-3 integrin receptor (ITGAV:ITGB3). The protein is Integrin-binding sialoprotein (IBSP) of Gallus gallus (Chicken).